Consider the following 340-residue polypeptide: Uroporphyrinogen decarboxylase (340 aa).

Residues 21 to 25 (RQAGR), aspartate 71, tyrosine 148, serine 203, and histidine 316 each bind substrate.

Belongs to the uroporphyrinogen decarboxylase family. In terms of assembly, homodimer.

It is found in the cytoplasm. It carries out the reaction uroporphyrinogen III + 4 H(+) = coproporphyrinogen III + 4 CO2. The protein operates within porphyrin-containing compound metabolism; protoporphyrin-IX biosynthesis; coproporphyrinogen-III from 5-aminolevulinate: step 4/4. Its function is as follows. Catalyzes the decarboxylation of four acetate groups of uroporphyrinogen-III to yield coproporphyrinogen-III. The chain is Uroporphyrinogen decarboxylase from Campylobacter concisus (strain 13826).